The following is a 140-amino-acid chain: Sex-regulated protein janus-B (140 aa).

R42 provides a ligand contact to substrate. The Proton acceptor role is filled by H69. 110–112 (SRT) provides a ligand contact to substrate.

Belongs to the janus family.

In terms of biological role, janA and janB regulate somatic sex differentiation. In Drosophila orena (Fruit fly), this protein is Sex-regulated protein janus-B (janB).